The primary structure comprises 275 residues: Large ribosomal subunit protein uL2 (275 aa).

Residues 220-275 form a disordered region; sequence VRGAAMNPRDHPHGGGEGRAPRGMPTPKTKWGKPARGVKTRHNPRTDPFIIRRRTR. Residues 227–239 are compositionally biased toward basic and acidic residues; that stretch reads PRDHPHGGGEGRA. Residues 249–262 are compositionally biased toward basic residues; it reads KWGKPARGVKTRHN.

This sequence belongs to the universal ribosomal protein uL2 family. Part of the 50S ribosomal subunit. Forms a bridge to the 30S subunit in the 70S ribosome.

Its function is as follows. One of the primary rRNA binding proteins. Required for association of the 30S and 50S subunits to form the 70S ribosome, for tRNA binding and peptide bond formation. It has been suggested to have peptidyltransferase activity; this is somewhat controversial. Makes several contacts with the 16S rRNA in the 70S ribosome. The sequence is that of Large ribosomal subunit protein uL2 from Roseiflexus sp. (strain RS-1).